The chain runs to 613 residues: Dihydroxy-acid dehydratase (613 aa).

A Mg(2+)-binding site is contributed by Asp81. Position 122 (Cys122) interacts with [2Fe-2S] cluster. Mg(2+) contacts are provided by Asp123 and Lys124. Lys124 carries the N6-carboxylysine modification. [2Fe-2S] cluster is bound at residue Cys195. Glu491 is a Mg(2+) binding site. Catalysis depends on Ser517, which acts as the Proton acceptor.

This sequence belongs to the IlvD/Edd family. In terms of assembly, homodimer. It depends on [2Fe-2S] cluster as a cofactor. Mg(2+) is required as a cofactor.

The enzyme catalyses (2R)-2,3-dihydroxy-3-methylbutanoate = 3-methyl-2-oxobutanoate + H2O. The catalysed reaction is (2R,3R)-2,3-dihydroxy-3-methylpentanoate = (S)-3-methyl-2-oxopentanoate + H2O. The protein operates within amino-acid biosynthesis; L-isoleucine biosynthesis; L-isoleucine from 2-oxobutanoate: step 3/4. It functions in the pathway amino-acid biosynthesis; L-valine biosynthesis; L-valine from pyruvate: step 3/4. Its function is as follows. Functions in the biosynthesis of branched-chain amino acids. Catalyzes the dehydration of (2R,3R)-2,3-dihydroxy-3-methylpentanoate (2,3-dihydroxy-3-methylvalerate) into 2-oxo-3-methylpentanoate (2-oxo-3-methylvalerate) and of (2R)-2,3-dihydroxy-3-methylbutanoate (2,3-dihydroxyisovalerate) into 2-oxo-3-methylbutanoate (2-oxoisovalerate), the penultimate precursor to L-isoleucine and L-valine, respectively. The polypeptide is Dihydroxy-acid dehydratase (Aeromonas hydrophila subsp. hydrophila (strain ATCC 7966 / DSM 30187 / BCRC 13018 / CCUG 14551 / JCM 1027 / KCTC 2358 / NCIMB 9240 / NCTC 8049)).